The primary structure comprises 523 residues: GMP synthase [glutamine-hydrolyzing] (523 aa).

The region spanning 9–198 is the Glutamine amidotransferase type-1 domain; sequence PVLVVDFGAQ…LTEIAGLEQN (190 aa). Cysteine 86 (nucleophile) is an active-site residue. Active-site residues include histidine 172 and glutamate 174. The GMPS ATP-PPase domain maps to 199–397; the sequence is WTAANIAEEL…LGLPEEIVGR (199 aa). ATP is bound at residue 227-233; the sequence is SGGVDSA.

Homodimer.

It catalyses the reaction XMP + L-glutamine + ATP + H2O = GMP + L-glutamate + AMP + diphosphate + 2 H(+). It participates in purine metabolism; GMP biosynthesis; GMP from XMP (L-Gln route): step 1/1. Functionally, catalyzes the synthesis of GMP from XMP. This is GMP synthase [glutamine-hydrolyzing] from Corynebacterium glutamicum (strain ATCC 13032 / DSM 20300 / JCM 1318 / BCRC 11384 / CCUG 27702 / LMG 3730 / NBRC 12168 / NCIMB 10025 / NRRL B-2784 / 534).